Consider the following 250-residue polypeptide: Beta-crystallin B1 (250 aa).

The tract at residues 1–47 (MSQVAKAAATTAVNPGPDGKGKGTPSTGTAPAPGPTPVPASVPRPAA) is disordered. Ser-2 bears the N-acetylserine mark. The tract at residues 2–56 (SQVAKAAATTAVNPGPDGKGKGTPSTGTAPAPGPTPVPASVPRPAAKVGELPPGS) is N-terminal arm. The segment covering 32-42 (APGPTPVPASV) has biased composition (pro residues). Beta/gamma crystallin 'Greek key' domains lie at 57–96 (YRLV…IVLS) and 97–141 (GPWV…RPIR). Residues 142 to 146 (MDSQE) are connecting peptide. Beta/gamma crystallin 'Greek key' domains lie at 147 to 188 (HKIC…TVSS) and 189 to 231 (GTWV…RRLR). Residues 233–250 (RQWHQEGCFPVLTAEPPK) are C-terminal arm.

It belongs to the beta/gamma-crystallin family. Homo/heterodimer, or complexes of higher-order. The structure of beta-crystallin oligomers seems to be stabilized through interactions between the N-terminal arms. Specific cleavages in the N-terminal arm occur during lens maturation and give rise to truncated forms, leading to impaired oligomerization and protein insolubilization. The protease responsible for this partial degradation could be calpain II.

Crystallins are the dominant structural components of the vertebrate eye lens. The sequence is that of Beta-crystallin B1 (Crybb1) from Rattus norvegicus (Rat).